The chain runs to 551 residues: Solute carrier family 22 member 13 (551 aa).

The Cytoplasmic portion of the chain corresponds to 1–20; the sequence is MAQFVQVLAEIGDFGRFQIQ. The chain crosses the membrane as a helical span at residues 21–41; it reads LLILLCVLNFLSPFYFFAHVF. Residues 42–138 are Extracellular-facing; sequence MVLDEPHHCA…LVCDRKHLKD (97 aa). 4 N-linked (GlcNAc...) asparagine glycosylation sites follow: Asn57, Asn61, Asn92, and Asn104. A helical membrane pass occupies residues 139–159; that stretch reads TTQSVFMAGLLVGTLMFGPLC. The Cytoplasmic portion of the chain corresponds to 160 to 167; that stretch reads DRIGRKAT. A helical transmembrane segment spans residues 168–188; that stretch reads ILAQLLLFTLIGLATAFVPSF. The Extracellular segment spans residues 189 to 195; sequence ELYMALR. A helical transmembrane segment spans residues 196-216; the sequence is FAVATAVAGLSFSNVTLLTEW. Residues 217-224 are Cytoplasmic-facing; the sequence is VGPSWRTQ. Residues 225–245 form a helical membrane-spanning segment; that stretch reads AVVLAQCNFSLGQMVLAGLAY. The Extracellular segment spans residues 246-251; it reads GFRNWR. The helical transmembrane segment at 252–272 threads the bilayer; it reads LLQITGTAPGLLLFFYFWALP. At 273 to 332 the chain is on the cytoplasmic side; sequence ESARWLLTRGRMDEAIQLIQKAASVNRRKLSPELMNQLVPEKTGPSGNALDLFRHPQLRK. A helical transmembrane segment spans residues 333–353; that stretch reads VTLIIFCVWFVDSLGYYGLSL. Position 354 (Gln354) is a topological domain, extracellular. Residues 355–375 form a helical membrane-spanning segment; the sequence is VGDFGLDVYLTQLIFGAVEVP. Over 376–397 the chain is Cytoplasmic; that stretch reads ARCSSIFMMQRFGRKWSQLGTL. Residues 398–418 form a helical membrane-spanning segment; sequence VLGGLMCIIIIFIPADLPVVV. The Extracellular portion of the chain corresponds to 419 to 427; the sequence is TMLAVVGKM. The chain crosses the membrane as a helical span at residues 428–448; sequence ATAAAFTISYVYSAELFPTIL. At 449-452 the chain is on the cytoplasmic side; that stretch reads RQTG. Residues 453 to 473 traverse the membrane as a helical segment; sequence MGLVGIFSRIGGILTPLVILL. Residues 474–478 are Extracellular-facing; sequence GEYHA. The helical transmembrane segment at 479–499 threads the bilayer; it reads ALPMLIYGSLPIVAGLLCTLL. Residues 500-551 are Cytoplasmic-facing; that stretch reads PETHGQGLKDTLQDLELGPHPRSPKSVPSEKETEAKGRTSSPGVAFVSSTYF. Residues 511–551 form a disordered region; it reads LQDLELGPHPRSPKSVPSEKETEAKGRTSSPGVAFVSSTYF. The span at 527-536 shows a compositional bias: basic and acidic residues; sequence PSEKETEAKG. Over residues 537–551 the composition is skewed to polar residues; sequence RTSSPGVAFVSSTYF.

Belongs to the major facilitator (TC 2.A.1) superfamily. Organic cation transporter (TC 2.A.1.19) family. In terms of processing, glycosylated. Ubiquitous. Highly expressed in kidneys and to a weaker extent in brain, heart, and intestine. In kidneys, expressed in proximal convoluted tubule. In kidneys, also expressed in cortical collecting duct, whereas glomerulus and thick ascending limb exhibit no expression.

The protein localises to the apical cell membrane. The catalysed reaction is urate(out) + (S)-lactate(in) = urate(in) + (S)-lactate(out). It carries out the reaction urate(out) + succinate(in) = urate(in) + succinate(out). The enzyme catalyses urate(out) + glutathione(in) = urate(in) + glutathione(out). It catalyses the reaction nicotinate(in) + urate(out) = nicotinate(out) + urate(in). The catalysed reaction is orotate(out) + a carboxylate(in) = orotate(in) + a carboxylate(out). Anion antiporter that mediates the transport of urate, orotate and nicotinate in exchange for organic or inorganic anions. Translocates urate and orotate across the apical membrane of proximal tubule epithelial cells and involved in urate renal reabsorption. Possibly involved in orotate renal reabsorption and nicotinate intestinal reabsorption. Mediates urate uptake by an exchange with organic anions such as (S)-lactate, succinate, glutathione and nicotinate. Urate and orotate transports are Cl(-)-dependent. Shows similar transport characteristics as the urate/orotate renal antiporter SLC22A12/URAT1 and may act as a compensator of SLC22A12/URAT1 in certain conditions. The chain is Solute carrier family 22 member 13 from Homo sapiens (Human).